The chain runs to 323 residues: tRNA dimethylallyltransferase (323 aa).

18-25 (GPTASGKT) contributes to the ATP binding site. 20–25 (TASGKT) provides a ligand contact to substrate. Residues 44–47 (DSAL) form an interaction with substrate tRNA region.

This sequence belongs to the IPP transferase family. In terms of assembly, monomer. Mg(2+) is required as a cofactor.

It carries out the reaction adenosine(37) in tRNA + dimethylallyl diphosphate = N(6)-dimethylallyladenosine(37) in tRNA + diphosphate. Its function is as follows. Catalyzes the transfer of a dimethylallyl group onto the adenine at position 37 in tRNAs that read codons beginning with uridine, leading to the formation of N6-(dimethylallyl)adenosine (i(6)A). The sequence is that of tRNA dimethylallyltransferase from Blochmanniella floridana.